The following is a 217-amino-acid chain: Adenylate kinase (217 aa).

10 to 15 (GAGKGT) contacts ATP. Residues 30–59 (STGDMLRAAVKAGTPLGLQAKDIMASGGLV) form an NMP region. Residues Thr31, Arg36, 57-59 (GLV), 85-88 (GFPR), and Gln92 contribute to the AMP site. An LID region spans residues 122–159 (GRRVHEASGRVYHIIHNAPRVEGHDDVTGEPLVQRPDD). ATP contacts are provided by residues Arg123 and 132 to 133 (VY). AMP contacts are provided by Arg156 and Arg167. Gly203 provides a ligand contact to ATP.

Belongs to the adenylate kinase family. Monomer.

The protein localises to the cytoplasm. It catalyses the reaction AMP + ATP = 2 ADP. The protein operates within purine metabolism; AMP biosynthesis via salvage pathway; AMP from ADP: step 1/1. Functionally, catalyzes the reversible transfer of the terminal phosphate group between ATP and AMP. Plays an important role in cellular energy homeostasis and in adenine nucleotide metabolism. The polypeptide is Adenylate kinase (Cellvibrio japonicus (strain Ueda107) (Pseudomonas fluorescens subsp. cellulosa)).